A 258-amino-acid polypeptide reads, in one-letter code: L-aminoadipate-semialdehyde dehydrogenase-phosphopantetheinyl transferase (258 aa).

It belongs to the P-Pant transferase superfamily. AcpS family.

Its subcellular location is the cytoplasm. The protein resides in the nucleus. It catalyses the reaction apo-[ACP] + CoA = holo-[ACP] + adenosine 3',5'-bisphosphate + H(+). In terms of biological role, catalyzes the transfer of a 4'-phosphopantetheine moiety from coenzyme A to a serine residue of acceptor proteins, such as alpha-aminoadipate reductase. Necessary for alpha-aminoadipate reductase activity. This is L-aminoadipate-semialdehyde dehydrogenase-phosphopantetheinyl transferase (lys7) from Schizosaccharomyces pombe (strain 972 / ATCC 24843) (Fission yeast).